The sequence spans 725 residues: Glutamine-dependent NAD(+) synthetase (725 aa).

The CN hydrolase domain maps to 4 to 274 (LKVATCNLNQ…VEVIISQVDL (271 aa)). Glutamate 44 (proton acceptor; for glutaminase activity) is an active-site residue. Catalysis depends on lysine 113, which acts as the For glutaminase activity. Cysteine 174 (nucleophile; for glutaminase activity) is an active-site residue. The interval 324-709 (YHSPQEEIAF…FPEEEANSNK (386 aa)) is ligase. Residue 354-361 (PLSGGADS) coordinates ATP. Serine 356 is a catalytic residue.

This sequence in the C-terminal section; belongs to the NAD synthetase family.

It carries out the reaction deamido-NAD(+) + L-glutamine + ATP + H2O = L-glutamate + AMP + diphosphate + NAD(+) + H(+). Its pathway is cofactor biosynthesis; NAD(+) biosynthesis; NAD(+) from deamido-NAD(+) (L-Gln route): step 1/1. The polypeptide is Glutamine-dependent NAD(+) synthetase (Arabidopsis thaliana (Mouse-ear cress)).